A 156-amino-acid chain; its full sequence is 6,7-dimethyl-8-ribityllumazine synthase (156 aa).

5-amino-6-(D-ribitylamino)uracil is bound by residues Phe23, 57-59 (AFE), and 81-83 (AVI). A (2S)-2-hydroxy-3-oxobutyl phosphate-binding site is contributed by 86-87 (ST). The Proton donor role is filled by His89. Phe114 lines the 5-amino-6-(D-ribitylamino)uracil pocket. Arg128 serves as a coordination point for (2S)-2-hydroxy-3-oxobutyl phosphate.

It belongs to the DMRL synthase family.

It carries out the reaction (2S)-2-hydroxy-3-oxobutyl phosphate + 5-amino-6-(D-ribitylamino)uracil = 6,7-dimethyl-8-(1-D-ribityl)lumazine + phosphate + 2 H2O + H(+). It participates in cofactor biosynthesis; riboflavin biosynthesis; riboflavin from 2-hydroxy-3-oxobutyl phosphate and 5-amino-6-(D-ribitylamino)uracil: step 1/2. Catalyzes the formation of 6,7-dimethyl-8-ribityllumazine by condensation of 5-amino-6-(D-ribitylamino)uracil with 3,4-dihydroxy-2-butanone 4-phosphate. This is the penultimate step in the biosynthesis of riboflavin. The chain is 6,7-dimethyl-8-ribityllumazine synthase from Sulfurospirillum multivorans (Dehalospirillum multivorans).